The following is a 294-amino-acid chain: 7,8-dihydropterin-6-methyl-4-(beta-D-ribofuranosyl)-aminobenzene-5'-phosphate synthase (294 aa).

Positions 116, 186, 228, and 265 each coordinate substrate.

This sequence belongs to the metallo-beta-lactamase superfamily. It depends on Mg(2+) as a cofactor.

The catalysed reaction is 4-(beta-D-ribofuranosyl)aminobenzene 5'-phosphate + (7,8-dihydropterin-6-yl)methyl diphosphate = N-[(7,8-dihydropterin-6-yl)methyl]-4-(beta-D-ribofuranosyl)aniline 5'-phosphate + diphosphate. It functions in the pathway cofactor biosynthesis; 5,6,7,8-tetrahydromethanopterin biosynthesis. In terms of biological role, catalyzes the condensation of 6-hydroxymethyl-7,8-dihydropterin pyrophosphate (DHPP) with 4-(beta-D-ribofuranosyl)-aminobenzene-5'-phosphate (beta-RFA-P) to form 7,8-dihydropterin-6-methyl-4-(beta-D-ribofuranosyl)-aminobenzene-5'-phosphate, a precursor in the biosynthesis of 5,6,7,8-tetrahydromethanopterin (H4MPT). To a lesser extent, is able to condense beta-RFA-P with another arylamine, 1-(4-aminophenyl)-1-deoxy-D-ribitol (APDR), to form 7,8-dihydropterin-6-methyl-1-(4-aminophenyl)-1-deoxy-D-ribitol. Dephosphorylated beta-RFA-P is not a substrate. This Methanocaldococcus jannaschii (strain ATCC 43067 / DSM 2661 / JAL-1 / JCM 10045 / NBRC 100440) (Methanococcus jannaschii) protein is 7,8-dihydropterin-6-methyl-4-(beta-D-ribofuranosyl)-aminobenzene-5'-phosphate synthase.